Reading from the N-terminus, the 94-residue chain is MVAMVKVLVVAKVYPDSVERNLEEMVENIKKSLPEGYELLQYQKVPVAFGLNLLKVYVAMPEETEGGTEKLEEVLKGVEGVSEVEIETVHRMSY.

The protein belongs to the EF-1-beta/EF-1-delta family.

Functionally, promotes the exchange of GDP for GTP in EF-1-alpha/GDP, thus allowing the regeneration of EF-1-alpha/GTP that could then be used to form the ternary complex EF-1-alpha/GTP/AAtRNA. The polypeptide is Elongation factor 1-beta (Ignicoccus hospitalis (strain KIN4/I / DSM 18386 / JCM 14125)).